Consider the following 37-residue polypeptide: Cytochrome b6-f complex subunit 5 (37 aa).

Residues 5 to 25 (LLFGIVLGLIPITLAGLFVTA) traverse the membrane as a helical segment.

This sequence belongs to the PetG family. In terms of assembly, the 4 large subunits of the cytochrome b6-f complex are cytochrome b6, subunit IV (17 kDa polypeptide, PetD), cytochrome f and the Rieske protein, while the 4 small subunits are PetG, PetL, PetM and PetN. The complex functions as a dimer.

It localises to the plastid. It is found in the chloroplast thylakoid membrane. Component of the cytochrome b6-f complex, which mediates electron transfer between photosystem II (PSII) and photosystem I (PSI), cyclic electron flow around PSI, and state transitions. PetG is required for either the stability or assembly of the cytochrome b6-f complex. The chain is Cytochrome b6-f complex subunit 5 from Lemna minor (Common duckweed).